We begin with the raw amino-acid sequence, 141 residues long: Hemoglobin subunit alpha-A (141 aa).

The Globin domain maps to 1-141 (VLTEEDKSRV…VAKTLVSRYR (141 aa)). Position 58 (His58) interacts with O2. Residue His87 coordinates heme b.

This sequence belongs to the globin family. In terms of assembly, heterotetramer of two alpha chains and two beta chains. As to expression, red blood cells.

Functionally, involved in oxygen transport from the lung to the various peripheral tissues. The chain is Hemoglobin subunit alpha-A from Drymarchon melanurus erebennus (Texas indigo snake).